Here is a 362-residue protein sequence, read N- to C-terminus: Heat-inducible transcription repressor HrcA (362 aa).

The protein belongs to the HrcA family.

Functionally, negative regulator of class I heat shock genes (grpE-dnaK-dnaJ and groELS operons). Prevents heat-shock induction of these operons. The polypeptide is Heat-inducible transcription repressor HrcA (Bradyrhizobium diazoefficiens (strain JCM 10833 / BCRC 13528 / IAM 13628 / NBRC 14792 / USDA 110)).